A 305-amino-acid polypeptide reads, in one-letter code: MCGIFGYCNFLIEKTRGEIIDTLIEGLQALEYKEYDSSGISIQGDELKSLNIYKQTGKISSLKEEIDLYNLNKNLPFISHCGITHTRRATHGGLRRANCHPHNSDPSNEFVVVHNGVITNFANLKALLVAKGYVFKSDTDTECIPKLYKHIYDTSIELGYNLDFHVLTNLVLKELEGSYGLLCTSSHFPDEVVAARKGSPLVIGVKGKTDMDVNFVEVEYLDQEEDYLKLNTQTKSSGNVLAAAPVKYNTCLRKSPPPSFTIPEKLYNFYIQSWLIHRNASRERLAATHGILFVIRLCITSAVCE.

Catalysis depends on Cys2, which acts as the Nucleophile; for GATase activity. The Glutamine amidotransferase type-2 domain occupies 2 to 305 (CGIFGYCNFL…RLCITSAVCE (304 aa)).

The enzyme catalyses D-fructose 6-phosphate + L-glutamine = D-glucosamine 6-phosphate + L-glutamate. It functions in the pathway nucleotide-sugar biosynthesis; UDP-N-acetyl-alpha-D-glucosamine biosynthesis; alpha-D-glucosamine 6-phosphate from D-fructose 6-phosphate: step 1/1. Functionally, involved in amino sugar synthesis (formation of chitin, supplies the amino sugars of asparagine-linked oligosaccharides of glycoproteins). This chain is Putative glutamine--fructose-6-phosphate aminotransferase [isomerizing], found in Saccharomyces cerevisiae (strain Lalvin EC1118 / Prise de mousse) (Baker's yeast).